We begin with the raw amino-acid sequence, 563 residues long: Forkhead box protein O (563 aa).

2 disordered regions span residues 1–72 and 177–243; these read MDDF…DPQQ and KSVR…SYQL. Thr-43 is modified (phosphothreonine; by PKB/AKT1). The span at 58–72 shows a compositional bias: polar residues; sequence TKASNQQLANGDPQQ. The segment at residues 90–196 is a DNA-binding region (fork-head); it reads WGNLSYADLI…ETSRYEKRRG (107 aa). Ser-185 is subject to Phosphoserine; by PKB/AKT1. Positions 216–225 are enriched in polar residues; the sequence is ATPSPSSSVS. A Phosphoserine; by PKB/AKT1 modification is found at Ser-253. Phosphoserine occurs at positions 256, 257, and 262. The tract at residues 317–371 is disordered; it reads AASGLPTQPPPPYQPPQHPQHTQGYALNGPGLSPNSVTTTMSPAYPNSEPSSDSL. Positions 323–334 are enriched in pro residues; it reads TQPPPPYQPPQH. Polar residues predominate over residues 349–358; that stretch reads SPNSVTTTMS.

As to quaternary structure, interacts with melt.

The protein resides in the cytoplasm. It is found in the nucleus. In terms of biological role, transcription factor involved in the regulation of the insulin signaling pathway. Consistently activates both the downstream target Thor\d4EBP and the feedback control target InR. Involved in negative regulation of the cell cycle, modulating cell growth and proliferation. In response to cellular stresses, such as nutrient deprivation or increased levels of reactive oxygen species, foxo is activated and inhibits growth through the action of target genes such as Thor. Foxo activated in the adult fat body can regulate lifespan in adults; an insulin peptide itself may function as one secondary messenger of insulin-regulated aging. Also regulates Lip4, homolog of human acid lipases, thereby acting as a key modulator of lipid metabolism by insulin signaling and integrates insulin responses to glucose and lipid homeostasis. The protein is Forkhead box protein O of Drosophila mojavensis (Fruit fly).